The sequence spans 905 residues: Respiratory burst oxidase homolog protein B (905 aa).

2 disordered regions span residues 1 to 46 (MADL…KTAR) and 69 to 134 (EVRG…VRKR). Topologically, residues 1–355 (MADLEAGMVA…MYFLEENWKR (355 aa)) are cytoplasmic. The segment covering 29–44 (IPNSGNLGSSNRSTKT) has biased composition (polar residues). Over residues 75 to 84 (EGGSGHGTGF) the composition is skewed to gly residues. Residues 91–108 (SPSSKSGKLTSKLRQVTN) show a composition bias toward polar residues. 2 EF-hand-like regions span residues 172–180 (QVDGVLLRS) and 206–217 (RGIVKQVLTKDE). 2 consecutive EF-hand domains span residues 229 to 264 (GFDN…SASA) and 273 to 308 (RADE…SPSE). Ca(2+) is bound by residues Asp-242, Asn-244, Asp-246, Arg-248, and Glu-253. A helical membrane pass occupies residues 356–376 (SWVMTLWISICIALFIWKFIQ). At 377 to 440 (YRNRAVFGIM…FNDNINFHKV (64 aa)) the chain is on the extracellular side. The 157-residue stretch at 395–551 (GAAETLKFNM…HLFVIVYTLL (157 aa)) folds into the Ferric oxidoreductase domain. The helical transmembrane segment at 441–461 (IAAGVAVGVALHAGAHLTCDF) threads the bilayer. Topologically, residues 462-496 (PRLLHASDAQYELMKPFFGEKRPPNYWWFVKGTEG) are cytoplasmic. The chain crosses the membrane as a helical span at residues 497-517 (WTGVVMVVLMAIAFTLAQPWF). Topologically, residues 518-539 (RRNKLKDSNPLKKMTGFNAFWF) are extracellular. A helical membrane pass occupies residues 540–560 (THHLFVIVYTLLFVHGTCLYL). The Cytoplasmic portion of the chain corresponds to 561–568 (SRKWYKKT). A helical membrane pass occupies residues 569 to 586 (TWMYLAVPVVLYVSERIL). In terms of domain architecture, FAD-binding FR-type spans 587–715 (RLFRSHDAVG…DGPYGAPAQD (129 aa)). Over 587–717 (RLFRSHDAVG…PYGAPAQDYR (131 aa)) the chain is Extracellular. A helical transmembrane segment spans residues 718–738 (EYDVLLLIGLGIGATPLISIV). Topologically, residues 739-905 (KDVLNHIQGE…TRFDFHKENF (167 aa)) are cytoplasmic.

The protein belongs to the RBOH (TC 5.B.1.3) family. As to quaternary structure, monomer and homodimer, stabilized by swapping the EF-hand motifs. Interacts with GTP-bound RAC1.

It is found in the membrane. In terms of biological role, calcium-dependent NADPH oxidase that generates superoxide. The sequence is that of Respiratory burst oxidase homolog protein B (RBOHB) from Oryza sativa subsp. japonica (Rice).